A 301-amino-acid polypeptide reads, in one-letter code: Bifunctional protein FolD (301 aa).

NADP(+) contacts are provided by residues 169 to 171, Ser194, and Ile235; that span reads GRS.

The protein belongs to the tetrahydrofolate dehydrogenase/cyclohydrolase family. As to quaternary structure, homodimer.

It carries out the reaction (6R)-5,10-methylene-5,6,7,8-tetrahydrofolate + NADP(+) = (6R)-5,10-methenyltetrahydrofolate + NADPH. The catalysed reaction is (6R)-5,10-methenyltetrahydrofolate + H2O = (6R)-10-formyltetrahydrofolate + H(+). The protein operates within one-carbon metabolism; tetrahydrofolate interconversion. Its function is as follows. Catalyzes the oxidation of 5,10-methylenetetrahydrofolate to 5,10-methenyltetrahydrofolate and then the hydrolysis of 5,10-methenyltetrahydrofolate to 10-formyltetrahydrofolate. This is Bifunctional protein FolD from Gloeothece citriformis (strain PCC 7424) (Cyanothece sp. (strain PCC 7424)).